We begin with the raw amino-acid sequence, 300 residues long: Putative 1-phosphofructokinase (300 aa).

ATP contacts are provided by residues 214–219 and 246–247; these read SDGAQG and GD. D247 serves as the catalytic Proton acceptor.

It belongs to the carbohydrate kinase PfkB family.

It catalyses the reaction beta-D-fructose 1-phosphate + ATP = beta-D-fructose 1,6-bisphosphate + ADP + H(+). Its function is as follows. Catalyzes the ATP-dependent phosphorylation of fructose-l-phosphate to fructose-l,6-bisphosphate. This Mycoplasma pneumoniae (strain ATCC 29342 / M129 / Subtype 1) (Mycoplasmoides pneumoniae) protein is Putative 1-phosphofructokinase (fruK).